The chain runs to 418 residues: Tyrosine--tRNA ligase (418 aa).

An L-tyrosine-binding site is contributed by tyrosine 39. The 'HIGH' region motif lies at cysteine 44–histidine 53. L-tyrosine is bound by residues tyrosine 176 and glutamine 180. Residues lysine 236–threonine 240 carry the 'KMSKS' region motif. Lysine 239 provides a ligand contact to ATP. An S4 RNA-binding domain is found at isoleucine 350–alanine 418.

Belongs to the class-I aminoacyl-tRNA synthetase family. TyrS type 1 subfamily. Homodimer.

The protein localises to the cytoplasm. It catalyses the reaction tRNA(Tyr) + L-tyrosine + ATP = L-tyrosyl-tRNA(Tyr) + AMP + diphosphate + H(+). In terms of biological role, catalyzes the attachment of tyrosine to tRNA(Tyr) in a two-step reaction: tyrosine is first activated by ATP to form Tyr-AMP and then transferred to the acceptor end of tRNA(Tyr). This is Tyrosine--tRNA ligase from Rhodopseudomonas palustris (strain ATCC BAA-98 / CGA009).